A 308-amino-acid polypeptide reads, in one-letter code: MGRLFGSLFHQTEELVMTPLRQRMSEDMQVRNFSLNTQLSYLRQVSLFARHFGKAPDLLGREDIRTYQVYLANEKKLAPNSIHIAIAALRFFFSVTLERDWVPAEVLPLPKKPQKLPIILSPDEVQHFLGCVLDLKHHAILTTCYAAGLRISEAVQLKPTDIDSQRMVVRVEQGKGQKDRYVMLSPKLLEILRDYWRMPRPKEWLFPGDRAGHPITRDAVGQACAKAHDLSRLSKPVTPHSLRHAFAVHLLEAGADVRTIQLLLGHRSLATTAHYLRIATNKVCATSSPFELLPRPAPTPPPAKPEYF.

Residues 15-97 (LVMTPLRQRM…ALRFFFSVTL (83 aa)) form the Core-binding (CB) domain. Residues 115–288 (KLPIILSPDE…ATNKVCATSS (174 aa)) form the Tyr recombinase domain. Residues Arg150, Lys175, His240, Arg243, and His266 contribute to the active site. The active-site O-(3'-phospho-DNA)-tyrosine intermediate is the Tyr275.

It belongs to the 'phage' integrase family.

Functionally, may function as an integrase. The protein is Putative integrase/recombinase y4qK of Sinorhizobium fredii (strain NBRC 101917 / NGR234).